A 170-amino-acid chain; its full sequence is CASP-like protein 2D1 (170 aa).

Over 1-4 (MLKL) the chain is Cytoplasmic. A helical transmembrane segment spans residues 5–25 (LDFSLRLSVIPLSVATIWLTV). The Extracellular portion of the chain corresponds to 26–47 (TNKQDNSIYGYLKYSDLTGLKY). A helical membrane pass occupies residues 48–68 (MVFISGICASYAFIAAVSTWI). Topologically, residues 69–83 (RCIVTKTWLFFVSDQ) are cytoplasmic. The helical transmembrane segment at 84–104 (IVAYLMVTSGTAVLEILYLAY) threads the bilayer. The Extracellular portion of the chain corresponds to 105–127 (NGDREVSWSEACTSYGKFCYRMK). Residues 128–148 (LAVILHALALSCFIILAVISA) form a helical membrane-spanning segment. Topologically, residues 149–170 (YRAFSIFEPPLVPSKVVEEDRA) are cytoplasmic.

The protein belongs to the Casparian strip membrane proteins (CASP) family. In terms of assembly, homodimer and heterodimers.

The protein resides in the cell membrane. This is CASP-like protein 2D1 from Populus trichocarpa (Western balsam poplar).